The following is a 357-amino-acid chain: Carbamoyl phosphate synthase small chain (357 aa).

A CPSase region spans residues 1 to 168; sequence MSKRLLILED…STATAYPSPN (168 aa). 3 residues coordinate L-glutamine: serine 46, glycine 220, and glycine 222. Residues 172 to 357 enclose the Glutamine amidotransferase type-1 domain; the sequence is KVVVVDFGLK…FMDLMDNFKK (186 aa). Cysteine 247 (nucleophile) is an active-site residue. Leucine 248, glutamine 251, asparagine 289, glycine 291, and tyrosine 292 together coordinate L-glutamine. Catalysis depends on residues histidine 331 and aspartate 333.

This sequence belongs to the CarA family. As to quaternary structure, composed of two chains; the small (or glutamine) chain promotes the hydrolysis of glutamine to ammonia, which is used by the large (or ammonia) chain to synthesize carbamoyl phosphate. Tetramer of heterodimers (alpha,beta)4.

The catalysed reaction is hydrogencarbonate + L-glutamine + 2 ATP + H2O = carbamoyl phosphate + L-glutamate + 2 ADP + phosphate + 2 H(+). It carries out the reaction L-glutamine + H2O = L-glutamate + NH4(+). Its pathway is amino-acid biosynthesis; L-arginine biosynthesis; carbamoyl phosphate from bicarbonate: step 1/1. It participates in pyrimidine metabolism; UMP biosynthesis via de novo pathway; (S)-dihydroorotate from bicarbonate: step 1/3. Its function is as follows. Small subunit of the glutamine-dependent carbamoyl phosphate synthetase (CPSase). CPSase catalyzes the formation of carbamoyl phosphate from the ammonia moiety of glutamine, carbonate, and phosphate donated by ATP, constituting the first step of 2 biosynthetic pathways, one leading to arginine and/or urea and the other to pyrimidine nucleotides. The small subunit (glutamine amidotransferase) binds and cleaves glutamine to supply the large subunit with the substrate ammonia. This Lactococcus lactis subsp. cremoris (strain MG1363) protein is Carbamoyl phosphate synthase small chain.